Here is a 54-residue protein sequence, read N- to C-terminus: Large ribosomal subunit protein bL33 (54 aa).

The protein belongs to the bacterial ribosomal protein bL33 family.

This is Large ribosomal subunit protein bL33 from Caldicellulosiruptor saccharolyticus (strain ATCC 43494 / DSM 8903 / Tp8T 6331).